The following is a 339-amino-acid chain: Terpene synthase 7 (339 aa).

Residues 79-84 (DDFLES) carry the DDxx(x)D/E motif motif. The NDxxSxxxD/E motif signature appears at 219 to 227 (NDCASYAKE).

Belongs to the terpene synthase family.

It catalyses the reaction (2E,6E)-farnesyl diphosphate = (-)-beta-barbatene + diphosphate. Functionally, terpene synthase that converts its substrate farnesyl diphosphate (FPP) into the sesquiterpene beta-barbatene. The sequence is that of Terpene synthase 7 from Dictyostelium discoideum (Social amoeba).